Here is an 831-residue protein sequence, read N- to C-terminus: Serine/threonine-protein kinase ATG1 (831 aa).

Residues 21–321 (YSVEKEIGKG…FTDFFNNEVV (301 aa)) enclose the Protein kinase domain. Residues 27 to 35 (IGKGSFAVV) and Lys-50 each bind ATP. Catalysis depends on Asp-168, which acts as the Proton acceptor. 2 stretches are compositionally biased toward polar residues: residues 360 to 382 (QQESAHIPPTQTDENTSVQTGVR) and 405 to 419 (NSQNPEQSYQSASQK). The interval 360–419 (QQESAHIPPTQTDENTSVQTGVRRTSGKERLATNHPPHQQIHPEDNSQNPEQSYQSASQK) is disordered.

This sequence belongs to the protein kinase superfamily. Ser/Thr protein kinase family. APG1/unc-51/ULK1 subfamily. Homodimer. Forms a ternary complex with ATG13 and ATG17.

The protein resides in the cytoplasm. It is found in the preautophagosomal structure membrane. The catalysed reaction is L-seryl-[protein] + ATP = O-phospho-L-seryl-[protein] + ADP + H(+). It catalyses the reaction L-threonyl-[protein] + ATP = O-phospho-L-threonyl-[protein] + ADP + H(+). Functionally, serine/threonine protein kinase involved in the cytoplasm to vacuole transport (Cvt) and found to be essential in autophagy, where it is required for the formation of autophagosomes. Involved in the clearance of protein aggregates which cannot be efficiently cleared by the proteasome. Required for selective autophagic degradation of the nucleus (nucleophagy) as well as for mitophagy which contributes to regulate mitochondrial quantity and quality by eliminating the mitochondria to a basal level to fulfill cellular energy requirements and preventing excess ROS production. Also involved in endoplasmic reticulum-specific autophagic process, in selective removal of ER-associated degradation (ERAD) substrates. Plays a key role in ATG9 and ATG23 cycling through the pre-autophagosomal structure and is necessary to promote ATG18 binding to ATG9 through phosphorylation of ATG9. Catalyzes phosphorylation of ATG4, decreasing the interaction between ATG4 and ATG8 and impairing deconjugation of PE-conjugated forms of ATG8. The protein is Serine/threonine-protein kinase ATG1 of Kluyveromyces lactis (strain ATCC 8585 / CBS 2359 / DSM 70799 / NBRC 1267 / NRRL Y-1140 / WM37) (Yeast).